Reading from the N-terminus, the 542-residue chain is GMP synthase [glutamine-hydrolyzing] (542 aa).

A Glutamine amidotransferase type-1 domain is found at 28–218 (MIVILDFGSQ…VYHICECEPT (191 aa)). Cys105 (nucleophile) is an active-site residue. Catalysis depends on residues His192 and Glu194. The 199-residue stretch at 219–417 (WTTEAFVEEA…IGLPEEIVRR (199 aa)) folds into the GMPS ATP-PPase domain. Residue 246-252 (SGGVDSS) coordinates ATP.

Homodimer.

The enzyme catalyses XMP + L-glutamine + ATP + H2O = GMP + L-glutamate + AMP + diphosphate + 2 H(+). It functions in the pathway purine metabolism; GMP biosynthesis; GMP from XMP (L-Gln route): step 1/1. Its function is as follows. Catalyzes the synthesis of GMP from XMP. In Gloeothece citriformis (strain PCC 7424) (Cyanothece sp. (strain PCC 7424)), this protein is GMP synthase [glutamine-hydrolyzing].